A 210-amino-acid chain; its full sequence is Ribosomal RNA large subunit methyltransferase E (210 aa).

S-adenosyl-L-methionine is bound by residues G55, W57, D75, D93, and D117. The Proton acceptor role is filled by K157. The disordered stretch occupies residues 175–210 (YRQVKTTKPPSSRKKSSEMYVVGLDFKPKKNKKSKD).

This sequence belongs to the class I-like SAM-binding methyltransferase superfamily. RNA methyltransferase RlmE family.

The protein resides in the cytoplasm. The catalysed reaction is uridine(2552) in 23S rRNA + S-adenosyl-L-methionine = 2'-O-methyluridine(2552) in 23S rRNA + S-adenosyl-L-homocysteine + H(+). Functionally, specifically methylates the uridine in position 2552 of 23S rRNA at the 2'-O position of the ribose in the fully assembled 50S ribosomal subunit. The polypeptide is Ribosomal RNA large subunit methyltransferase E (Methanobrevibacter smithii (strain ATCC 35061 / DSM 861 / OCM 144 / PS)).